The sequence spans 397 residues: Elongation factor Tu (397 aa).

The region spanning 10 to 207 is the tr-type G domain; the sequence is LPHVNVGTIG…TLDSYIPEPV (198 aa). The tract at residues 19 to 26 is G1; that stretch reads GHVDHGKT. 19–26 is a binding site for GTP; that stretch reads GHVDHGKT. A Mg(2+)-binding site is contributed by Thr-26. The segment at 60–64 is G2; the sequence is GITIN. Residues 81 to 84 form a G3 region; it reads DCPG. GTP-binding positions include 81–85 and 136–139; these read DCPGH and NKAD. Positions 136 to 139 are G4; sequence NKAD. The segment at 174-176 is G5; that stretch reads SAR.

This sequence belongs to the TRAFAC class translation factor GTPase superfamily. Classic translation factor GTPase family. EF-Tu/EF-1A subfamily. As to quaternary structure, monomer.

The protein localises to the cytoplasm. The catalysed reaction is GTP + H2O = GDP + phosphate + H(+). Its function is as follows. GTP hydrolase that promotes the GTP-dependent binding of aminoacyl-tRNA to the A-site of ribosomes during protein biosynthesis. The chain is Elongation factor Tu from Pseudomonas syringae pv. syringae (strain B728a).